The following is a 120-amino-acid chain: Ragulator complex protein LAMTOR4 homolog (120 aa).

The disordered stretch occupies residues 93–120 (QNGVTTTTSSSSSNSVYNDASDSGAVLA). Low complexity predominate over residues 97–107 (TTTTSSSSSNS).

It belongs to the LAMTOR4 family. As to quaternary structure, part of the Ragulator complex composed of Lamtor3, Lamtor2, CG14184, CG14812, and Lamtor4.

The protein localises to the lysosome. Functionally, regulator of the TOR pathway, a signaling cascade that promotes cell growth in response to growth factors, energy levels, and amino acids. As part of the Ragulator complex, may activate the TOR signaling cascade in response to amino acids. In Drosophila melanogaster (Fruit fly), this protein is Ragulator complex protein LAMTOR4 homolog.